The following is a 192-amino-acid chain: uncharacterized protein (192 aa).

A signal peptide spans 1 to 18 (MNSKFILKYFILAFFLVS). Cys19 is lipidated: N-palmitoyl cysteine. A lipid anchor (S-diacylglycerol cysteine) is attached at Cys19.

It is found in the cell membrane. This is an uncharacterized protein from Borreliella burgdorferi (strain ATCC 35210 / DSM 4680 / CIP 102532 / B31) (Borrelia burgdorferi).